The primary structure comprises 236 residues: 5'-methylthioadenosine/S-adenosylhomocysteine nucleosidase (236 aa).

Residue glutamate 12 is the Proton acceptor of the active site. Substrate is bound by residues glycine 78, isoleucine 153, and 174–175 (ME). Aspartate 198 acts as the Proton donor in catalysis.

This sequence belongs to the PNP/UDP phosphorylase family. MtnN subfamily.

The enzyme catalyses S-adenosyl-L-homocysteine + H2O = S-(5-deoxy-D-ribos-5-yl)-L-homocysteine + adenine. It catalyses the reaction S-methyl-5'-thioadenosine + H2O = 5-(methylsulfanyl)-D-ribose + adenine. The catalysed reaction is 5'-deoxyadenosine + H2O = 5-deoxy-D-ribose + adenine. It participates in amino-acid biosynthesis; L-methionine biosynthesis via salvage pathway; S-methyl-5-thio-alpha-D-ribose 1-phosphate from S-methyl-5'-thioadenosine (hydrolase route): step 1/2. Catalyzes the irreversible cleavage of the glycosidic bond in both 5'-methylthioadenosine (MTA) and S-adenosylhomocysteine (SAH/AdoHcy) to adenine and the corresponding thioribose, 5'-methylthioribose and S-ribosylhomocysteine, respectively. Also cleaves 5'-deoxyadenosine, a toxic by-product of radical S-adenosylmethionine (SAM) enzymes, into 5-deoxyribose and adenine. The protein is 5'-methylthioadenosine/S-adenosylhomocysteine nucleosidase of Shewanella baltica (strain OS155 / ATCC BAA-1091).